Here is a 422-residue protein sequence, read N- to C-terminus: Kynurenine--oxoglutarate transaminase 1 (422 aa).

Positions 36 and 185 each coordinate substrate. N6-(pyridoxal phosphate)lysine is present on Lys247. Arg398 contributes to the substrate binding site.

Belongs to the class-I pyridoxal-phosphate-dependent aminotransferase family. In terms of assembly, homodimer. Pyridoxal 5'-phosphate is required as a cofactor.

It localises to the cytoplasm. Its subcellular location is the cytosol. It catalyses the reaction L-kynurenine + 2-oxoglutarate = kynurenate + L-glutamate + H2O. The catalysed reaction is 3-phenylpyruvate + L-glutamine = 2-oxoglutaramate + L-phenylalanine. The enzyme catalyses an S-substituted L-cysteine + H2O = a thiol + pyruvate + NH4(+). The protein operates within amino-acid degradation; L-kynurenine degradation; kynurenate from L-kynurenine: step 1/2. Its activity is regulated as follows. Inhibited by tryptophan, indole-3-pyruvic acid, 3-indolepropionic acid, DL-indole-3-lactic acid, indole-3-acetic acid (IAC), amino-oxyacetate (AOAA), aminooxy-phenylpropionic acid (AOPP) and Tris. Catalyzes the irreversible transamination of the L-tryptophan metabolite L-kynurenine to form kynurenic acid (KA), an intermediate in the tryptophan catabolic pathway which is also a broad spectrum antagonist of the three ionotropic excitatory amino acid receptors among others. Also metabolizes the cysteine conjugates of certain halogenated alkenes and alkanes to form reactive metabolites. Catalyzes the beta-elimination of S-conjugates and Se-conjugates of L-(seleno)cysteine, resulting in the cleavage of the C-S or C-Se bond. This Homo sapiens (Human) protein is Kynurenine--oxoglutarate transaminase 1.